Reading from the N-terminus, the 364-residue chain is UDP-N-acetylglucosamine--N-acetylmuramyl-(pentapeptide) pyrophosphoryl-undecaprenol N-acetylglucosamine transferase (364 aa).

UDP-N-acetyl-alpha-D-glucosamine-binding positions include T15–G17, N123, R164, S191, and Q286.

It belongs to the glycosyltransferase 28 family. MurG subfamily.

It localises to the cell inner membrane. The enzyme catalyses di-trans,octa-cis-undecaprenyl diphospho-N-acetyl-alpha-D-muramoyl-L-alanyl-D-glutamyl-meso-2,6-diaminopimeloyl-D-alanyl-D-alanine + UDP-N-acetyl-alpha-D-glucosamine = di-trans,octa-cis-undecaprenyl diphospho-[N-acetyl-alpha-D-glucosaminyl-(1-&gt;4)]-N-acetyl-alpha-D-muramoyl-L-alanyl-D-glutamyl-meso-2,6-diaminopimeloyl-D-alanyl-D-alanine + UDP + H(+). It participates in cell wall biogenesis; peptidoglycan biosynthesis. Cell wall formation. Catalyzes the transfer of a GlcNAc subunit on undecaprenyl-pyrophosphoryl-MurNAc-pentapeptide (lipid intermediate I) to form undecaprenyl-pyrophosphoryl-MurNAc-(pentapeptide)GlcNAc (lipid intermediate II). The sequence is that of UDP-N-acetylglucosamine--N-acetylmuramyl-(pentapeptide) pyrophosphoryl-undecaprenol N-acetylglucosamine transferase from Prochlorococcus marinus subsp. pastoris (strain CCMP1986 / NIES-2087 / MED4).